The following is a 785-amino-acid chain: Hyperosmolality-gated Ca2+ permeable channel 1.7 (785 aa).

Residues 7–27 (IGLSAAINLLSAFAFLFAFAM) traverse the membrane as a helical segment. Serine 54 is subject to Phosphoserine. 9 helical membrane passes run 101-121 (IYLL…GVLV), 156-176 (FWAH…ILYM), 373-393 (LLTT…IAFV), 425-445 (FLPG…LMTM), 465-485 (YFWF…TAFQ), 510-530 (ATFF…AEIL), 582-602 (AVAP…YVVF), 628-648 (LIIC…TKKF), and 651-671 (VTAL…YCAG). The interval 725–761 (VDEEESNPLVRTKRTSQGTTRYNSEASSSATTTPVAN) is disordered. Residues 739 to 761 (TSQGTTRYNSEASSSATTTPVAN) are compositionally biased toward polar residues.

The protein belongs to the CSC1 (TC 1.A.17) family. Phosphorylated and activated by BIK1.

The protein resides in the membrane. It carries out the reaction Ca(2+)(in) = Ca(2+)(out). Its function is as follows. Calcium-permeable channel involved in plant stomatal immunity. This chain is Hyperosmolality-gated Ca2+ permeable channel 1.7, found in Arabidopsis thaliana (Mouse-ear cress).